Consider the following 374-residue polypeptide: UPF0754 membrane protein SAS1767 (374 aa).

The next 2 membrane-spanning stretches (helical) occupy residues 4–24 (LFII…TNVI) and 354–374 (SLGF…AIFV).

It belongs to the UPF0754 family.

The protein localises to the cell membrane. The protein is UPF0754 membrane protein SAS1767 of Staphylococcus aureus (strain MSSA476).